A 318-amino-acid polypeptide reads, in one-letter code: Probable carboxylesterase 1 (318 aa).

Residue M1 is modified to N-acetylmethionine. An Involved in the stabilization of the negatively charged intermediate by the formation of the oxyanion hole motif is present at residues 79 to 81 (HGG). Residues S163, D258, and H290 contribute to the active site.

Belongs to the 'GDXG' lipolytic enzyme family. As to expression, expressed in roots, stems, flowers and siliques.

It carries out the reaction a carboxylic ester + H2O = an alcohol + a carboxylate + H(+). In terms of biological role, carboxylesterase acting on esters with varying acyl chain length. The chain is Probable carboxylesterase 1 (CXE1) from Arabidopsis thaliana (Mouse-ear cress).